Consider the following 142-residue polypeptide: Peptide methionine sulfoxide reductase MsrB (142 aa).

The MsrB domain occupies 2–125 (LKKDKSELTD…NSAAIQFIPY (124 aa)). The active-site Nucleophile is C114.

This sequence belongs to the MsrB Met sulfoxide reductase family.

It catalyses the reaction L-methionyl-[protein] + [thioredoxin]-disulfide + H2O = L-methionyl-(R)-S-oxide-[protein] + [thioredoxin]-dithiol. The protein is Peptide methionine sulfoxide reductase MsrB of Staphylococcus aureus (strain USA300).